A 210-amino-acid polypeptide reads, in one-letter code: Cytochrome c biogenesis ATP-binding export protein CcmA (210 aa).

Positions 3–205 constitute an ABC transporter domain; it reads LHLQAAGLAC…KPSGYRELNL (203 aa). 37 to 44 is a binding site for ATP; the sequence is GPNGSGKT.

The protein belongs to the ABC transporter superfamily. CcmA exporter (TC 3.A.1.107) family. In terms of assembly, the complex is composed of two ATP-binding proteins (CcmA) and two transmembrane proteins (CcmB).

It is found in the cell inner membrane. It carries out the reaction heme b(in) + ATP + H2O = heme b(out) + ADP + phosphate + H(+). Part of the ABC transporter complex CcmAB involved in the biogenesis of c-type cytochromes; once thought to export heme, this seems not to be the case, but its exact role is uncertain. Responsible for energy coupling to the transport system. This Pseudomonas putida (strain GB-1) protein is Cytochrome c biogenesis ATP-binding export protein CcmA.